The chain runs to 178 residues: Large ribosomal subunit protein uL10 (178 aa).

The protein belongs to the universal ribosomal protein uL10 family. Part of the ribosomal stalk of the 50S ribosomal subunit. The N-terminus interacts with L11 and the large rRNA to form the base of the stalk. The C-terminus forms an elongated spine to which L12 dimers bind in a sequential fashion forming a multimeric L10(L12)X complex.

Functionally, forms part of the ribosomal stalk, playing a central role in the interaction of the ribosome with GTP-bound translation factors. The polypeptide is Large ribosomal subunit protein uL10 (Dictyoglomus thermophilum (strain ATCC 35947 / DSM 3960 / H-6-12)).